The primary structure comprises 442 residues: Meiosis-specific with OB domain-containing protein (442 aa).

The OB DNA-binding region spans 167–272 (IINVLAAVKS…EANILLNFIR (106 aa)).

It belongs to the MEIOB family. Component of a multiprotein complex with RPA2 and SPATA22. Interacts with SPATA22. Interacts with the complex BRME1:HSF2BP:BRCA2. In terms of tissue distribution, in fetal gonads, specifically expressed in the ovary starting at the 14th weeks post fertilization. In the adult, restricted to testis.

It localises to the cytoplasm. The protein resides in the nucleus. The protein localises to the chromosome. Its function is as follows. Single-stranded DNA-binding protein required for homologous recombination in meiosis I. Required for double strand breaks (DSBs) repair and crossover formation and promotion of faithful and complete synapsis. Not required for the initial loading of recombinases but required to maintain a proper number of RAD51 and DMC1 foci after the zygotene stage. May act by ensuring the stabilization of recombinases, which is required for successful homology search and meiotic recombination. Displays Single-stranded DNA 3'-5' exonuclease activity in vitro. This chain is Meiosis-specific with OB domain-containing protein, found in Homo sapiens (Human).